The chain runs to 198 residues: Small ribosomal subunit protein uS4 (198 aa).

An S4 RNA-binding domain is found at 91 to 151; sequence SRLDNIVYRL…EKSKNLKIVE (61 aa).

This sequence belongs to the universal ribosomal protein uS4 family. In terms of assembly, part of the 30S ribosomal subunit. Contacts protein S5. The interaction surface between S4 and S5 is involved in control of translational fidelity.

Functionally, one of the primary rRNA binding proteins, it binds directly to 16S rRNA where it nucleates assembly of the body of the 30S subunit. In terms of biological role, with S5 and S12 plays an important role in translational accuracy. In Phytoplasma australiense, this protein is Small ribosomal subunit protein uS4.